Reading from the N-terminus, the 370-residue chain is Queuine tRNA-ribosyltransferase (370 aa).

Asp-93 serves as the catalytic Proton acceptor. Substrate contacts are provided by residues 93–97 (DSGGF), Asp-147, Gln-190, and Gly-217. The segment at 248 to 254 (GVGTPDY) is RNA binding. Residue Asp-267 is the Nucleophile of the active site. The tract at residues 272 to 276 (TRVAR) is RNA binding; important for wobble base 34 recognition. Cys-305, Cys-307, Cys-310, and His-336 together coordinate Zn(2+).

It belongs to the queuine tRNA-ribosyltransferase family. Homodimer. Within each dimer, one monomer is responsible for RNA recognition and catalysis, while the other monomer binds to the replacement base PreQ1. The cofactor is Zn(2+).

The enzyme catalyses 7-aminomethyl-7-carbaguanine + guanosine(34) in tRNA = 7-aminomethyl-7-carbaguanosine(34) in tRNA + guanine. The protein operates within tRNA modification; tRNA-queuosine biosynthesis. Its function is as follows. Catalyzes the base-exchange of a guanine (G) residue with the queuine precursor 7-aminomethyl-7-deazaguanine (PreQ1) at position 34 (anticodon wobble position) in tRNAs with GU(N) anticodons (tRNA-Asp, -Asn, -His and -Tyr). Catalysis occurs through a double-displacement mechanism. The nucleophile active site attacks the C1' of nucleotide 34 to detach the guanine base from the RNA, forming a covalent enzyme-RNA intermediate. The proton acceptor active site deprotonates the incoming PreQ1, allowing a nucleophilic attack on the C1' of the ribose to form the product. After dissociation, two additional enzymatic reactions on the tRNA convert PreQ1 to queuine (Q), resulting in the hypermodified nucleoside queuosine (7-(((4,5-cis-dihydroxy-2-cyclopenten-1-yl)amino)methyl)-7-deazaguanosine). The sequence is that of Queuine tRNA-ribosyltransferase from Natranaerobius thermophilus (strain ATCC BAA-1301 / DSM 18059 / JW/NM-WN-LF).